We begin with the raw amino-acid sequence, 178 residues long: Large ribosomal subunit protein uL6 (178 aa).

Belongs to the universal ribosomal protein uL6 family. Part of the 50S ribosomal subunit.

This protein binds to the 23S rRNA, and is important in its secondary structure. It is located near the subunit interface in the base of the L7/L12 stalk, and near the tRNA binding site of the peptidyltransferase center. The protein is Large ribosomal subunit protein uL6 of Streptococcus thermophilus (strain CNRZ 1066).